We begin with the raw amino-acid sequence, 367 residues long: NADH-quinone oxidoreductase subunit D (367 aa).

This sequence belongs to the complex I 49 kDa subunit family. As to quaternary structure, NDH-1 is composed of 14 different subunits. Subunits NuoB, C, D, E, F, and G constitute the peripheral sector of the complex.

It localises to the cell membrane. It catalyses the reaction a quinone + NADH + 5 H(+)(in) = a quinol + NAD(+) + 4 H(+)(out). NDH-1 shuttles electrons from NADH, via FMN and iron-sulfur (Fe-S) centers, to quinones in the respiratory chain. The immediate electron acceptor for the enzyme in this species is believed to be ubiquinone. Couples the redox reaction to proton translocation (for every two electrons transferred, four hydrogen ions are translocated across the cytoplasmic membrane), and thus conserves the redox energy in a proton gradient. The sequence is that of NADH-quinone oxidoreductase subunit D from Dehalococcoides mccartyi (strain CBDB1).